We begin with the raw amino-acid sequence, 398 residues long: Cytochrome b (398 aa).

Residues 45-65 (LGSIAGIALVIQIITGVILAM) form a helical membrane-spanning segment. Heme b is bound by residues His-95 and His-109. 9 helical membrane-spanning segments follow: residues 96–116 (AVGA…GLYY), 129–149 (IGII…VLPW), 164–184 (FSAI…GFSV), 192–212 (FFAL…LHLV), 245–265 (FVGF…APNY), 277–297 (PLVT…YAIL), 304–324 (LGGV…PWLD), 339–359 (IAFW…SKPV), and 366–386 (ISRF…PLIG). Residues His-196 and His-210 each coordinate heme b.

The protein belongs to the cytochrome b family. As to quaternary structure, the main subunits of complex b-c1 are: cytochrome b, cytochrome c1 and the Rieske protein. It depends on heme b as a cofactor.

It is found in the cell membrane. Its function is as follows. Component of the ubiquinol-cytochrome c reductase complex (complex III or cytochrome b-c1 complex), which is a respiratory chain that generates an electrochemical potential coupled to ATP synthesis. The sequence is that of Cytochrome b (petB) from Rickettsia prowazekii (strain Madrid E).